The following is a 680-amino-acid chain: UvrABC system protein C (680 aa).

The GIY-YIG domain occupies 66 to 144 (NSPGVYRMFN…IKRLRPRFNV (79 aa)). One can recognise a UVR domain in the interval 254-289 (QKVKSHMAEAMNQAAEDLDFERAAIYRDRLAALSHV).

The protein belongs to the UvrC family. In terms of assembly, interacts with UvrB in an incision complex.

The protein resides in the cytoplasm. Functionally, the UvrABC repair system catalyzes the recognition and processing of DNA lesions. UvrC both incises the 5' and 3' sides of the lesion. The N-terminal half is responsible for the 3' incision and the C-terminal half is responsible for the 5' incision. In Rhizobium johnstonii (strain DSM 114642 / LMG 32736 / 3841) (Rhizobium leguminosarum bv. viciae), this protein is UvrABC system protein C.